Here is a 971-residue protein sequence, read N- to C-terminus: MELSDANLQTLTEYLKKTLDPDPAIRRPAEKFLESVEGNQNYPLLLLTLLEKSQDNVIKVCASVTFKNYIKRNWRIVEDEPNKICEADRVAIKANIVHLMLSSPEQIQKQLSDAISIIGREDFPQKWPDLLTEMVNRFQSGDFHVINGVLRTAHSLFKRYRHEFKSNELWTEIKLVLDAFALPLTNLFKATIELCSTHANDASALRILFSSLILISKLFYSLNFQDLPEFFEDNMETWMNNFHTLLTLDNKLLQTDDEEEAGLLELLKSQICDNAALYAQKYDEEFQRYLPRFVTAIWNLLVTTGQEVKYDLLVSNAIQFLASVCERPHYKNLFEDQNTLTSICEKVIVPNMEFRAADEEAFEDNSEEYIRRDLEGSDIDTRRRAACDLVRGLCKFFEGPVTGIFSGYVNSMLQEYAKNPSVNWKHKDAAIYLVTSLASKAQTQKHGITQANELVNLTEFFVNHILPDLKSANVNEFPVLKADGIKYITIFRNQVPKEHLLVSIPLLINHLQAESIVVHTYAAHALERLFTMRGPNSATLFTAAEIAPFVEILLTNLFKALTLPGSSENEYIMKAIMRSFSLLQEAIIPYIPTLITQLTQKLLAVSKNPSKPHFNHYMFEAICLSIRITCKSNPAAVVNFEEALFLVFTEILQNDVQEFIPYVFQVMSLLLETHKNDIPSSYMALFPHLLQPVLWERTGNIPALVRLLQAFLERGSNTIASAAADKIPGLLGVFQKLIASKANDHQGFYLLNSIIEHMPPESVDQYRKQIFILLFQRLQNSKTTKFIKSFLVFINLYCIKYGALALQEIFDGIQPKMFGMVLEKIIIPEIQKVSGNVEKKICAVGITKLLTECPPMMDTEYTKLWTPLLQSLIGLFELPEDDTIPDEEHFIDIEDTPGYQTAFSQLAFAGKKEHDPVGQMVNNPKIHLAQSLHKLSTACPGRVPSMVSTSLNAEALQYLQGYLQAASVTLL.

An N-acetylmethionine modification is found at M1. The Importin N-terminal domain occupies 29 to 102 (AEKFLESVEG…KANIVHLMLS (74 aa)). S112 is subject to Phosphoserine. N6-acetyllysine occurs at positions 574 and 824. S931 carries the post-translational modification Phosphoserine.

It belongs to the XPO2/CSE1 family. Found in a complex with CSE1L/XPO2, Ran and KPNA2. Binds with high affinity to importin-alpha only in the presence of RanGTP. The complex is dissociated by the combined action of RanBP1 and RanGAP1. Interacts with CFTR.

It is found in the cytoplasm. The protein localises to the nucleus. Export receptor for importin-alpha. Mediates importin-alpha re-export from the nucleus to the cytoplasm after import substrates (cargos) have been released into the nucleoplasm. In the nucleus binds cooperatively to importin-alpha and to the GTPase Ran in its active GTP-bound form. Docking of this trimeric complex to the nuclear pore complex (NPC) is mediated through binding to nucleoporins. Upon transit of a nuclear export complex into the cytoplasm, disassembling of the complex and hydrolysis of Ran-GTP to Ran-GDP (induced by RANBP1 and RANGAP1, respectively) cause release of the importin-alpha from the export receptor. CSE1L/XPO2 then return to the nuclear compartment and mediate another round of transport. The directionality of nuclear export is thought to be conferred by an asymmetric distribution of the GTP- and GDP-bound forms of Ran between the cytoplasm and nucleus. The chain is Exportin-2 (CSE1L) from Bos taurus (Bovine).